The chain runs to 505 residues: Outer capsid protein VP5 (505 aa).

The tract at residues 1-42 (MGKFTSFLKRAGSATKKALTSDAAKRMYKMAGKTLQKVVESE) is involved in membrane permeabilization.

The protein belongs to the orbivirus VP5 family.

It localises to the virion. VP5 protein is one of the two proteins (with VP2) which constitute the virus particle outer capsid. Acts as a membrane permeabilization protein that mediates release of viral particles from endosomal compartments into the cytoplasm. Permeabilization activity is probably negatively regulated by VP2 and is triggered by endosomal degradation of VP2 and exposure to low pH. This African horse sickness virus 9 (AHSV-9) protein is Outer capsid protein VP5 (Segment-6).